The following is a 134-amino-acid chain: Cilia- and flagella-associated protein 144 (134 aa).

The disordered stretch occupies residues 76 to 95 (QGPRKKYPETQTENQEVGWD).

It belongs to the CFAP144 family. As to quaternary structure, microtubule inner protein component of sperm flagellar doublet microtubules.

It localises to the cytoplasm. The protein resides in the cytoskeleton. It is found in the cilium axoneme. The protein localises to the flagellum axoneme. Microtubule inner protein (MIP) part of the dynein-decorated doublet microtubules (DMTs) in cilia axoneme, which is required for motile cilia beating. This chain is Cilia- and flagella-associated protein 144, found in Homo sapiens (Human).